Here is an 88-residue protein sequence, read N- to C-terminus: UPF0147 protein Ta0600 (88 aa).

Belongs to the UPF0147 family.

In Thermoplasma acidophilum (strain ATCC 25905 / DSM 1728 / JCM 9062 / NBRC 15155 / AMRC-C165), this protein is UPF0147 protein Ta0600.